Here is a 1023-residue protein sequence, read N- to C-terminus: Sodium/potassium-transporting ATPase subunit alpha-1 (1023 aa).

Positions 1-5 (MGKGV) are excised as a propeptide. Residues 1–11 (MGKGVGRDKYE) are compositionally biased toward basic and acidic residues. A disordered region spans residues 1–39 (MGKGVGRDKYEPAAVSEQGDKKGKKGKKDRDMDELKKEV). Residues 6 to 87 (GRDKYEPAAV…NALTPPPTTP (82 aa)) lie on the Cytoplasmic side of the membrane. The residue at position 9 (Lys-9) is an N6-acetyllysine. Position 10 is a phosphotyrosine (Tyr-10). Ser-16 carries the phosphoserine modification. The residue at position 21 (Lys-21) is an N6-acetyllysine. Over residues 28–39 (KDRDMDELKKEV) the composition is skewed to basic and acidic residues. Residues Ser-40 and Ser-47 each carry the phosphoserine modification. A phosphoinositide-3 kinase binding region spans residues 82-84 (PPP). Residues 88-108 (EWIKFCRQLFGGFSMLLWIGA) form a helical membrane-spanning segment. The Extracellular portion of the chain corresponds to 109 to 131 (ILCFLAYSIQAATEEEPQNDNLY). Residues 132 to 152 (LGVVLSAVVIITGCFSYYQEA) form a helical membrane-spanning segment. At 153–288 (KSSKIMESFK…GGQTPIAAEI (136 aa)) the chain is on the cytoplasmic side. Positions 216–235 (SSLTGESEPQTRSPDFTNEN) are disordered. At Ser-228 the chain carries Phosphoserine. A Phosphotyrosine modification is found at Tyr-260. The chain crosses the membrane as a helical span at residues 289–308 (EHFIHIITGVAVFLGVSFFI). Topologically, residues 309-320 (LSLILEYTWLEA) are extracellular. Residues 321–338 (VIFLIGIIVANVPEGLLA) traverse the membrane as a helical segment. At 339 to 772 (TVTVCLTLTA…EEGRLIFDNL (434 aa)) the chain is on the cytoplasmic side. Asp-376 (4-aspartylphosphate intermediate) is an active-site residue. Residues Ser-452 and Ser-484 each carry the phosphoserine modification. Lys-487 lines the ATP pocket. A Phosphotyrosine modification is found at Tyr-542. The interval 596–717 (RAAVPDAVGK…QGAIVAVTGD (122 aa)) is mediates interaction with SCN7A. Lys-661 carries the N6-succinyllysine modification. A phosphoserine mark is found at Ser-668 and Ser-675. Mg(2+) is bound by residues Asp-717 and Asp-721. Residues 773–792 (KKSIAYTLTSNIPEITPFLI) form a helical membrane-spanning segment. At 793–802 (FIIANIPLPL) the chain is on the extracellular side. The helical transmembrane segment at 803-823 (GTVTILCIDLGTDMVPAISLA) threads the bilayer. The Cytoplasmic portion of the chain corresponds to 824 to 843 (YEQAESDIMKRQPRNPKTDK). A helical membrane pass occupies residues 844–866 (LVNERLISMAYGQIGMIQALGGF). Topologically, residues 867-918 (FTYFVILAENGFLPIHLLGLRVDWDDRWINDVEDSYGQQWTYEQRKIVEFTC) are extracellular. Residues 919-938 (HTAFFVSIVVVQWADLVICK) traverse the membrane as a helical segment. Residues 939–951 (TRRNSVFQQGMKN) lie on the Cytoplasmic side of the membrane. Ser-943 bears the Phosphoserine; by PKA mark. A helical transmembrane segment spans residues 952 to 970 (KILIFGLFEETALAAFLSY). Over 971-985 (CPGMGVALRMYPLKP) the chain is Extracellular. Residues 986–1006 (TWWFCAFPYSLLIFVYDEVRK) form a helical membrane-spanning segment. The Cytoplasmic portion of the chain corresponds to 1007–1023 (LIIRRRPGGWVEKETYY).

This sequence belongs to the cation transport ATPase (P-type) (TC 3.A.3) family. Type IIC subfamily. As to quaternary structure, the sodium/potassium-transporting ATPase is composed of a catalytic alpha subunit, an auxiliary non-catalytic beta subunit and an additional regulatory subunit. Interacts with regulatory subunit FXYD1. Interacts with regulatory subunit FXYD3. Interacts with SIK1. Binds the HLA class II histocompatibility antigen DR1. Interacts with SLC35G1 and STIM1. Interacts with CLN3; this interaction regulates the sodium/potassium-transporting ATPase complex localization at the plasma membrane. Interacts with SCN7A; activates ATP1A1 P-type sodium:potassium-exchanging transporter activity which indirectly signals to nearby neurons to regulate sodium homeostasis. Post-translationally, phosphorylation on Tyr-10 modulates pumping activity. Phosphorylation of Ser-943 by PKA modulates the response of ATP1A1 to PKC. Dephosphorylation by protein phosphatase 2A (PP2A) following increases in intracellular sodium, leading to increase catalytic activity.

The protein localises to the cell membrane. Its subcellular location is the basolateral cell membrane. It is found in the sarcolemma. The protein resides in the cell projection. It localises to the axon. The protein localises to the melanosome. The enzyme catalyses K(+)(out) + Na(+)(in) + ATP + H2O = K(+)(in) + Na(+)(out) + ADP + phosphate + H(+). This is the catalytic component of the active enzyme, which catalyzes the hydrolysis of ATP coupled with the exchange of sodium and potassium ions across the plasma membrane. This action creates the electrochemical gradient of sodium and potassium ions, providing the energy for active transport of various nutrients. Could also be part of an osmosensory signaling pathway that senses body-fluid sodium levels and controls salt intake behavior as well as voluntary water intake to regulate sodium homeostasis. The chain is Sodium/potassium-transporting ATPase subunit alpha-1 (ATP1A1) from Homo sapiens (Human).